The primary structure comprises 92 residues: Small ribosomal subunit protein uS19 (92 aa).

The protein belongs to the universal ribosomal protein uS19 family.

In terms of biological role, protein S19 forms a complex with S13 that binds strongly to the 16S ribosomal RNA. The sequence is that of Small ribosomal subunit protein uS19 from Klebsiella pneumoniae (strain 342).